The chain runs to 290 residues: Fructose-1,6-bisphosphatase class 1 (290 aa).

Positions 78, 96, 98, and 99 each coordinate Mg(2+). Residues 99-102 (DGSS), Tyr-201, and Lys-226 contribute to the substrate site. Glu-232 is a binding site for Mg(2+).

The protein belongs to the FBPase class 1 family. Homotetramer. The cofactor is Mg(2+).

It is found in the cytoplasm. It carries out the reaction beta-D-fructose 1,6-bisphosphate + H2O = beta-D-fructose 6-phosphate + phosphate. The protein operates within carbohydrate biosynthesis; gluconeogenesis. This Helicobacter pylori (strain Shi470) protein is Fructose-1,6-bisphosphatase class 1.